A 508-amino-acid chain; its full sequence is UTP--glucose-1-phosphate uridylyltransferase (508 aa).

Residue S13 is modified to Phosphoserine. UTP is bound by residues 113-116, K127, Q190, and G222; that span reads LNGG. 115–116 contributes to the substrate binding site; that stretch reads GG. K127 lines the Mg(2+) pocket. Residues H223 and 251-253 each bind substrate; that span reads NID. Residues D253 and K396 each coordinate UTP. Position 253 (D253) interacts with Mg(2+). The active site involves K396. The residue at position 426 (T426) is a Phosphothreonine. S434 bears the Phosphoserine mark. Residue K438 is modified to N6-acetyllysine. S448 and S461 each carry phosphoserine. The tract at residues 457–508 is oligomerization; the sequence is HLTVSGDVTFGKNVSLKGTVIIIANHGDRIDIPPGAVLENKIVSGNLRILDH. The tract at residues 502-503 is critical for end-to-end subunit interaction; that stretch reads NL.

Belongs to the UDPGP type 1 family. As to quaternary structure, homooctamer.

It localises to the cytoplasm. The catalysed reaction is alpha-D-glucose 1-phosphate + UTP + H(+) = UDP-alpha-D-glucose + diphosphate. It functions in the pathway glycan biosynthesis; glycogen biosynthesis. UTP--glucose-1-phosphate uridylyltransferase catalyzing the conversion of glucose-1-phosphate into UDP-glucose, a crucial precursor for the production of glycogen. This chain is UTP--glucose-1-phosphate uridylyltransferase (UGP2), found in Cricetulus griseus (Chinese hamster).